Reading from the N-terminus, the 463-residue chain is ATP synthase subunit beta (463 aa).

151 to 158 (GGAGVGKT) serves as a coordination point for ATP.

The protein belongs to the ATPase alpha/beta chains family. As to quaternary structure, F-type ATPases have 2 components, CF(1) - the catalytic core - and CF(0) - the membrane proton channel. CF(1) has five subunits: alpha(3), beta(3), gamma(1), delta(1), epsilon(1). CF(0) has three main subunits: a(1), b(2) and c(9-12). The alpha and beta chains form an alternating ring which encloses part of the gamma chain. CF(1) is attached to CF(0) by a central stalk formed by the gamma and epsilon chains, while a peripheral stalk is formed by the delta and b chains.

The protein localises to the cell membrane. The enzyme catalyses ATP + H2O + 4 H(+)(in) = ADP + phosphate + 5 H(+)(out). Produces ATP from ADP in the presence of a proton gradient across the membrane. The catalytic sites are hosted primarily by the beta subunits. This chain is ATP synthase subunit beta, found in Clostridium botulinum (strain ATCC 19397 / Type A).